We begin with the raw amino-acid sequence, 223 residues long: Ribonuclease 3 (223 aa).

The 123-residue stretch at 3-125 (LEKLQKKLGH…LIAAIYLDAG (123 aa)) folds into the RNase III domain. A Mg(2+)-binding site is contributed by glutamate 38. Aspartate 42 is a catalytic residue. Mg(2+) contacts are provided by aspartate 111 and glutamate 114. Glutamate 114 is an active-site residue. The 71-residue stretch at 152-222 (DPKTRLQEFL…AQQAIEKLKI (71 aa)) folds into the DRBM domain.

It belongs to the ribonuclease III family. As to quaternary structure, homodimer. Requires Mg(2+) as cofactor.

It localises to the cytoplasm. The catalysed reaction is Endonucleolytic cleavage to 5'-phosphomonoester.. Its function is as follows. Digests double-stranded RNA. Involved in the processing of primary rRNA transcript to yield the immediate precursors to the large and small rRNAs (23S and 16S). Processes some mRNAs, and tRNAs when they are encoded in the rRNA operon. Processes pre-crRNA and tracrRNA of type II CRISPR loci if present in the organism. This is Ribonuclease 3 from Histophilus somni (strain 2336) (Haemophilus somnus).